We begin with the raw amino-acid sequence, 363 residues long: Flagellar P-ring protein (363 aa).

Positions 1 to 21 (MKTVINIFILFTFLASLSANA) are cleaved as a signal peptide.

The protein belongs to the FlgI family. The basal body constitutes a major portion of the flagellar organelle and consists of four rings (L,P,S, and M) mounted on a central rod.

Its subcellular location is the periplasm. The protein resides in the bacterial flagellum basal body. Its function is as follows. Assembles around the rod to form the L-ring and probably protects the motor/basal body from shearing forces during rotation. The polypeptide is Flagellar P-ring protein (Colwellia psychrerythraea (strain 34H / ATCC BAA-681) (Vibrio psychroerythus)).